Reading from the N-terminus, the 495-residue chain is Probable serine/threonine-protein kinase DDB_G0292354 (495 aa).

The Protein kinase domain maps to 16 to 275 (WTVVKKIGQG…PNYVFLQTLL (260 aa)). ATP is bound by residues 22 to 30 (IGQGAFGEI) and Lys45. Asp136 (proton acceptor) is an active-site residue. The disordered stretch occupies residues 293–469 (EVQTNSGASS…NGNGSNSQPI (177 aa)). 2 stretches are compositionally biased toward low complexity: residues 295 to 333 (QTNSGASSSSSNTTQQQQQQQQQQQQRNLNQSGLNNSSA) and 354 to 364 (NNSNNNNNNNN). Polar residues predominate over residues 385–395 (ESNSQIANSSE). Over residues 435-466 (SNNNNINNNNNNYNNNNNNNNNSHMNGNGSNS) the composition is skewed to low complexity.

This sequence belongs to the protein kinase superfamily. CK1 Ser/Thr protein kinase family.

The chain is Probable serine/threonine-protein kinase DDB_G0292354 from Dictyostelium discoideum (Social amoeba).